The primary structure comprises 161 residues: Suppressor of kinetochore protein 1 (161 aa).

Residues 102–161 (VLASNYLDIKPLLDTGCKTVANMIRGKSPEDIRKTFNIPNDFTPEEEEQIRKENEWAEDR) form an interaction with the F-box domain of F-box proteins region.

This sequence belongs to the SKP1 family. As to quaternary structure, essential component of the E3 ubiquitin ligase Skp1-Cullin-1-F-box (SCF) complex. Interacts with cul1, fbh1, mcs2, pip1, pof1, pof2, pof3, pof4, pof5, pof6, pof7, pof8, pof9, pof10, pof11, pof12, pof13, pof14, pop1, pop2 and tfb3. Forms a complex with pof6 and sip1. Component of the RAVE complex composed of rav1, rav2 and skp1.

Its subcellular location is the cytoplasm. The protein resides in the nucleus. Functionally, required for cig2 degradation in the G2 and M phases of the cell cycle. Together with pof6, essential for septum processing and cell separation. Involved in mitotic progression, essential for the execution of anaphase B; required for coordinated structural alterations of mitotic spindles and segregation of nuclear membrane structures at anaphase. Involved in the DNA damage checkpoint pathway and maintenance of genome integrity. Component of the RAVE complex which is required for stable assembly of the vacuolar ATPase complex V-ATPase. The chain is Suppressor of kinetochore protein 1 from Schizosaccharomyces pombe (strain 972 / ATCC 24843) (Fission yeast).